The chain runs to 558 residues: MAMSLKKIGAIAVGGAMVATALASGVAAEVTTSGFSDYKELKDILVKDGQPNCYVVVGADAPSTMDVVSAADIAAKIGSLCYKEGTVEDGSADITVHAEANSDDFDLKKDWNNSAMPANAYALFVAASDGDYSEKFENDTGKPSFMDNGVLGDADKINKTVDLGDIATMMKVDDVDPSDWYDSDDDAGEIVMVELKNDTSDGFTVYKKNMLYETLVYKDDEENFANTTKMEEGMRIPFLGKEMVVVDIDKDDDAIYLGTPVYDGIIKEGETYDLGNGYQVKIKAILKTTVNNTDVYKVDVQILKDGKVVAEKYDKAPLELEYKDDVGVTVHKAWENVGGDYGYAELVISKDLKKLELDEEYVTDWKAYAVLNDNGTMKLEDDLNDNNVDKVVGIALRYDGDKLDDLDSGDEVDILDYVKFKLDDEDSNDKLKVYFSMDKDVDATLNIGEKVKALNAEVKLKDIKANAVEPVSLTAPIAKLDTEVSLDTADKNLVLVGGPVANKLTKELVDAGKLALDNNSPATIALIPDAANGHDVIVVAGGDREKTREAALELIKNL.

An N-terminal signal peptide occupies residues 1–28 (MAMSLKKIGAIAVGGAMVATALASGVAA). 7 N-linked (GlcNAc...) asparagine glycosylation sites follow: asparagine 112, asparagine 138, asparagine 158, asparagine 197, asparagine 226, asparagine 291, and asparagine 374.

This sequence belongs to the Mj S-layer protein family.

It is found in the secreted. The protein localises to the cell wall. Its subcellular location is the S-layer. Its function is as follows. S-layer protein. The S-layer is a paracrystalline mono-layered assembly of proteins which coat the surface of the cell. The chain is S-layer protein (sla) from Methanocaldococcus jannaschii (strain ATCC 43067 / DSM 2661 / JAL-1 / JCM 10045 / NBRC 100440) (Methanococcus jannaschii).